The sequence spans 1875 residues: Nonribosomal peptide synthetase otaB (1875 aa).

An adenylation 1 region spans residues 202 to 590 (GQVRENGDRA…SIRFAGRRQA (389 aa)). One can recognise a Carrier domain in the interval 724 to 800 (SPMTAAERVM…DLVAHIKDAG (77 aa)). Residue S761 is modified to O-(pantetheine 4'-phosphoryl)serine. The tract at residues 836–1245 (EDVYPCTTLQ…LVSPLDEERL (410 aa)) is condensation. The adenylation 2 stretch occupies residues 1264 to 1659 (QKQSYAQPQA…ARKDTQVKIR (396 aa)).

It belongs to the NRP synthetase family.

It catalyses the reaction 7-carboxymellein + L-phenylalanine + ATP = ochratoxin B + ADP + phosphate + H(+). It participates in mycotoxin biosynthesis. Functionally, nonribosomal peptide synthetase; part of the gene cluster that mediates the biosynthesis of ochratoxin A (OTA), a mycotoxin composed of a chlorinated type I polyketide dihydroisocoumarin moiety linked to L-phenylalanine, and demonstrated to have nephrotoxic, immunotoxic, genotoxic, neurotoxic, and teratogenic properties. OtaB is responsible for the linking of phenylalanine to the dihydroisocoumarin ring. The pathway begins with the highly reducing polyketide synthase otaA that catalyzes the formation of the isocoumarin group during the initial stages of biosynthesis, starting from one acetate and 4 malonate units, to originate the characteristic pentaketide skeleton 7-methylmellein (7-MM) of the OTA molecule. The newly identified cyclase otaY might be involved in the polyketide cyclization reaction during the initial steps of the OTA biosynthesis. 7-MM is then oxidized into 7-carboxymellein (also called ochratoxin beta) by the cytochrome P450 monooxygenase otaC. The NRPS encoded by the otaB gene is involved in the linking of phenylalanine to the dihydroisocoumarin ring. The reaction catalyzed by NRPS results in the production of ochratoxin B (OTB), which is the non-chlorinated analog of OTA and which subsequently serves as the substrate of the halogenase otaD for chlorination activity to form the final molecular structure of OTA, containing a chlorine atom in the C-5 position of the molecule. This chain is Nonribosomal peptide synthetase otaB, found in Aspergillus carbonarius (strain ITEM 5010).